Here is a 419-residue protein sequence, read N- to C-terminus: Tryptophan synthase beta chain (419 aa).

Lysine 98 is modified (N6-(pyridoxal phosphate)lysine).

The protein belongs to the TrpB family. Tetramer of two alpha and two beta chains. The cofactor is pyridoxal 5'-phosphate.

It carries out the reaction (1S,2R)-1-C-(indol-3-yl)glycerol 3-phosphate + L-serine = D-glyceraldehyde 3-phosphate + L-tryptophan + H2O. It functions in the pathway amino-acid biosynthesis; L-tryptophan biosynthesis; L-tryptophan from chorismate: step 5/5. Its function is as follows. The beta subunit is responsible for the synthesis of L-tryptophan from indole and L-serine. This Ruegeria sp. (strain TM1040) (Silicibacter sp.) protein is Tryptophan synthase beta chain.